Consider the following 62-residue polypeptide: Potassium channel toxin alpha-KTx 6.21 (62 aa).

The N-terminal stretch at Met1–Ala24 is a signal peptide. Cystine bridges form between Cys29/Cys50, Cys35/Cys55, Cys39/Cys57, and Cys45/Cys60. At Val61 the chain carries Valine amide.

The protein belongs to the short scorpion toxin superfamily. Potassium channel inhibitor family. Alpha-KTx 06 subfamily. In terms of processing, C-terminal amidation is important for activity. There is a 50-70-fold decrease in ability to inhibit Kv1.2/KCNA2 when the toxin is not amidated. This decrease may be explained by a 23-fold slower association rate (k(on)) together with a 2-fold faster dissociation rate (k(off)). In terms of tissue distribution, expressed by the venom gland.

It is found in the secreted. Its function is as follows. Reversible blocker of voltage-gated potassium channels with fast binding and unbinding kinetics. Has highest activity on human voltage-gated potassium channel Kv1.2/KCNA2 channels (IC(50)=0.11-0.16 nM), whereas its affinity for other channels tested was in the nanomolar range (hKv1.1/KCNA1, IC(50)=253 nM; hKv1.3/KCNA3, IC(50)=91 nM; and hKCa3.1/KCNN4, IC(50)=70 nM). This is Potassium channel toxin alpha-KTx 6.21 from Urodacus yaschenkoi (Inland robust scorpion).